The chain runs to 83 residues: Protein MATERNALLY EXPRESSED GENE 3 (83 aa).

The first 22 residues, 1-22, serve as a signal peptide directing secretion; the sequence is MQWLAFVAPRWRCVCDQELSAQ. A disulfide bridge connects residues cysteine 60 and cysteine 82.

This sequence belongs to the MEG family. Expressed in endosperm, anther and pollen.

This chain is Protein MATERNALLY EXPRESSED GENE 3 (MEG3), found in Zea mays (Maize).